The following is a 229-amino-acid chain: UPF0173 metal-dependent hydrolase SH1218 (229 aa).

It belongs to the UPF0173 family.

The chain is UPF0173 metal-dependent hydrolase SH1218 from Staphylococcus haemolyticus (strain JCSC1435).